The primary structure comprises 128 residues: Ribonuclease pancreatic B (128 aa).

The segment at 1-21 (AESSAMKFQRQHMDPEGSPSN) is disordered. Substrate contacts are provided by Lys-7 and Arg-10. Residue His-12 is the Proton acceptor of the active site. Asn-21 and Asn-34 each carry an N-linked (GlcNAc...) asparagine glycan. Cystine bridges form between Cys-26/Cys-84, Cys-40/Cys-95, Cys-58/Cys-110, and Cys-65/Cys-72. Substrate-binding positions include 41 to 45 (KPVNT), Lys-66, and Arg-85. The active-site Proton donor is His-119.

It belongs to the pancreatic ribonuclease family. Pancreas.

The protein resides in the secreted. The catalysed reaction is an [RNA] containing cytidine + H2O = an [RNA]-3'-cytidine-3'-phosphate + a 5'-hydroxy-ribonucleotide-3'-[RNA].. It catalyses the reaction an [RNA] containing uridine + H2O = an [RNA]-3'-uridine-3'-phosphate + a 5'-hydroxy-ribonucleotide-3'-[RNA].. The protein is Ribonuclease pancreatic B of Cavia porcellus (Guinea pig).